The primary structure comprises 466 residues: Paraneoplastic antigen Ma3 homolog (466 aa).

Residues 379 to 408 (RPYQGSRRRRHRRRGQHRKGGVPRDDSQGT) are disordered. Positions 384 to 399 (SRRRRHRRRGQHRKGG) are enriched in basic residues. Residues 415 to 432 (TFCYSCGEDGHIRVHCFN) form a CCHC-type zinc finger. A disordered region spans residues 441-466 (QKRQAAMEKGNRSWAWEKSHPKPKTK). Residues 445-460 (AAMEKGNRSWAWEKSH) show a composition bias toward basic and acidic residues.

It belongs to the PNMA family. In terms of tissue distribution, expressed in the cerebrum and cerebellum.

The protein localises to the nucleus. Its subcellular location is the nucleolus. In Mus musculus (Mouse), this protein is Paraneoplastic antigen Ma3 homolog (Pnma3).